A 366-amino-acid chain; its full sequence is Neutral protease 2 homolog BDBG_02110 (366 aa).

The signal sequence occupies residues 1 to 19 (MQLSSVLLTAAGLLAPVYS). A propeptide spanning residues 23–184 (ISIGRRSEGL…RAKIHDHLAQ (162 aa)) is cleaved from the precursor. N-linked (GlcNAc...) asparagine glycans are attached at residues Asn-123 and Asn-192. Cys-272 and Cys-290 form a disulfide bridge. Position 314 (His-314) interacts with Zn(2+). Glu-315 is an active-site residue. His-318 serves as a coordination point for Zn(2+).

It belongs to the peptidase M35 family. Zn(2+) is required as a cofactor.

It is found in the secreted. It carries out the reaction Preferential cleavage of bonds with hydrophobic residues in P1'. Also 3-Asn-|-Gln-4 and 8-Gly-|-Ser-9 bonds in insulin B chain.. Secreted metalloproteinase that allows assimilation of proteinaceous substrates. Shows high activities on basic nuclear substrates such as histone and protamine. The polypeptide is Neutral protease 2 homolog BDBG_02110 (Blastomyces gilchristii (strain SLH14081) (Blastomyces dermatitidis)).